A 589-amino-acid chain; its full sequence is Transmembrane 9 superfamily member 1 (589 aa).

The signal sequence occupies residues M1–G27. The N-linked (GlcNAc...) asparagine glycan is linked to N178. Helical transmembrane passes span L237–L257, V310–L330, G339–V359, and V373–V393. The N-linked (GlcNAc...) asparagine glycan is linked to N401. The next 3 membrane-spanning stretches (helical) occupy residues I412–I432, G482–L502, and S518–A538. N542 carries an N-linked (GlcNAc...) asparagine glycan. Residues F552–F572 traverse the membrane as a helical segment.

Belongs to the nonaspanin (TM9SF) (TC 9.A.2) family.

It is found in the lysosome membrane. The protein localises to the cytoplasmic vesicle. Its subcellular location is the autophagosome membrane. Its function is as follows. Plays an essential role in autophagy. The polypeptide is Transmembrane 9 superfamily member 1 (Tm9sf1) (Rattus norvegicus (Rat)).